The following is a 140-amino-acid chain: uncharacterized protein (140 aa).

Residues 1-15 (MQRQTGHMEDKKRTG) show a composition bias toward basic and acidic residues. Residues 1–34 (MQRQTGHMEDKKRTGLESQGTENAFSDGRDGKDG) form a disordered region.

This is an uncharacterized protein from Gallus gallus (Chicken).